Consider the following 337-residue polypeptide: Anthranilate phosphoribosyltransferase (337 aa).

Residues Gly-81, 84–85 (GD), Thr-89, 91–94 (NIST), 109–117 (KHGNRALSS), and Thr-121 each bind 5-phospho-alpha-D-ribose 1-diphosphate. Residue Gly-81 participates in anthranilate binding. Ser-93 is a Mg(2+) binding site. Asn-112 lines the anthranilate pocket. Arg-167 contributes to the anthranilate binding site. Mg(2+) is bound by residues Asp-225 and Glu-226.

The protein belongs to the anthranilate phosphoribosyltransferase family. In terms of assembly, homodimer. Requires Mg(2+) as cofactor.

The catalysed reaction is N-(5-phospho-beta-D-ribosyl)anthranilate + diphosphate = 5-phospho-alpha-D-ribose 1-diphosphate + anthranilate. It functions in the pathway amino-acid biosynthesis; L-tryptophan biosynthesis; L-tryptophan from chorismate: step 2/5. Its function is as follows. Catalyzes the transfer of the phosphoribosyl group of 5-phosphorylribose-1-pyrophosphate (PRPP) to anthranilate to yield N-(5'-phosphoribosyl)-anthranilate (PRA). This chain is Anthranilate phosphoribosyltransferase, found in Sinorhizobium medicae (strain WSM419) (Ensifer medicae).